The chain runs to 375 residues: Succinyl-diaminopimelate desuccinylase (375 aa).

Histidine 66 serves as a coordination point for Zn(2+). Aspartate 68 is an active-site residue. Zn(2+) is bound at residue aspartate 99. Glutamate 133 functions as the Proton acceptor in the catalytic mechanism. 3 residues coordinate Zn(2+): glutamate 134, glutamate 162, and histidine 348.

It belongs to the peptidase M20A family. DapE subfamily. In terms of assembly, homodimer. The cofactor is Zn(2+). Co(2+) is required as a cofactor.

The catalysed reaction is N-succinyl-(2S,6S)-2,6-diaminopimelate + H2O = (2S,6S)-2,6-diaminopimelate + succinate. Its pathway is amino-acid biosynthesis; L-lysine biosynthesis via DAP pathway; LL-2,6-diaminopimelate from (S)-tetrahydrodipicolinate (succinylase route): step 3/3. Its function is as follows. Catalyzes the hydrolysis of N-succinyl-L,L-diaminopimelic acid (SDAP), forming succinate and LL-2,6-diaminopimelate (DAP), an intermediate involved in the bacterial biosynthesis of lysine and meso-diaminopimelic acid, an essential component of bacterial cell walls. The chain is Succinyl-diaminopimelate desuccinylase from Pectobacterium atrosepticum (strain SCRI 1043 / ATCC BAA-672) (Erwinia carotovora subsp. atroseptica).